A 184-amino-acid chain; its full sequence is Translocon-associated protein subunit beta (184 aa).

An N-terminal signal peptide occupies residues 1–20; the sequence is MNFKTVISLFLVLFVSFVYC. Over 21-147 the chain is Lumenal; sequence ENGAELLFHK…SQADYEKRTS (127 aa). Asn94 is a glycosylation site (N-linked (GlcNAc...) asparagine). The chain crosses the membrane as a helical span at residues 148–168; it reads LLIKEWITFFVLCAGAIALPY. Residues 169-184 lie on the Cytoplasmic side of the membrane; sequence SISTYYKKNYENGIKK.

Belongs to the TRAP-beta family. As to quaternary structure, heterotrimer of TRAP-alpha, TRAP-beta and TRAP-gamma.

Its subcellular location is the endoplasmic reticulum membrane. Its function is as follows. TRAP proteins are part of a complex whose function is to bind calcium to the ER membrane and thereby regulate the retention of ER resident proteins. The chain is Translocon-associated protein subunit beta (ssr2) from Dictyostelium discoideum (Social amoeba).